We begin with the raw amino-acid sequence, 534 residues long: Cytochrome P450 monooxygenase ascG (534 aa).

Residues 13–33 (FVASFPALSAAAGLIVAISFI) traverse the membrane as a helical segment. An N-linked (GlcNAc...) asparagine glycan is attached at Asn-466. Cys-469 contributes to the heme binding site.

Belongs to the cytochrome P450 family. Requires heme as cofactor.

It is found in the membrane. The catalysed reaction is ilicicolin C + NADPH + O2 + H(+) = ascochlorin + NADP(+) + 2 H2O. It functions in the pathway secondary metabolite biosynthesis; terpenoid biosynthesis. Its function is as follows. Cytochrome P450 monooxygenase; part of the asc-1 gene cluster that mediates the biosynthesis of both ascochlorin and ascofuranone, a strong inhibitor of cyanide-insensitive alternative oxidases and a promising drug candidate against African trypanosomiasis. The first step in the pathway is performed by the non-reducing polyketide synthase ascC that produces orsellinic acid by condensing acetyl-CoA with 3 malonyl-CoA units. Orsellinic acid is then prenylated by the prenyltransferase ascA to yield ilicicolinic acid B. Ilicicolinic acid B is further reduced to ilicicolin B by the reductase ascB. The halogenase ascD then chlorinates ilicicolin B to produce ilicicolin A which is converted to ilicicolin A epoxide by the cytochrome P450 monooxygenase ascE that catalyzes stereoselective epoxidation of the terminal double bond of the prenyl group. Ilicicolin A epoxide is the last common precursor for the biosynthesis of ascofuranone and ascochlorin. The terpene cyclase ascF produces a monocyclic terpene, and the cyclization reaction is proposed to be initiated by protonation of the terminal epoxide of ilicicolin A epoxide to generate a monocyclic tertiarycation, which is followed by a series of hydride and methyl shifts with abstraction of proton, leading to the formation of the (14S,15R,19R)-trimethylcyclohexanone ring structure of ilicicolin C, which is finally reduced to ascochlorin by the dehydrogenase ascG. On the other hand, ilicicolin A epoxide is hydroxylated by the cytochrome P450 monooxygenase ascH, and the resultant product is cyclized by the terpene cyclase ascI to ascofuranol via protonation-initiated epoxide ring opening, which facilitates the 6-endo-tet cyclization to form the tetrahy-drofuran ring. Finally, ascofuranol is oxidized into ascofuranone by ascJ. The sequence is that of Cytochrome P450 monooxygenase ascG from Acremonium egyptiacum (Oospora egyptiaca).